The following is a 679-amino-acid chain: DNA-directed RNA polymerase subunit beta' (679 aa).

Zn(2+) contacts are provided by Cys69, Cys71, Cys84, and Cys87. Mg(2+) contacts are provided by Asp486, Asp488, and Asp490.

The protein belongs to the RNA polymerase beta' chain family. RpoC1 subfamily. In plastids the minimal PEP RNA polymerase catalytic core is composed of four subunits: alpha, beta, beta', and beta''. When a (nuclear-encoded) sigma factor is associated with the core the holoenzyme is formed, which can initiate transcription. Mg(2+) serves as cofactor. The cofactor is Zn(2+).

It is found in the plastid. The protein resides in the chloroplast. The enzyme catalyses RNA(n) + a ribonucleoside 5'-triphosphate = RNA(n+1) + diphosphate. In terms of biological role, DNA-dependent RNA polymerase catalyzes the transcription of DNA into RNA using the four ribonucleoside triphosphates as substrates. The protein is DNA-directed RNA polymerase subunit beta' of Physcomitrium patens (Spreading-leaved earth moss).